The sequence spans 202 residues: Small ribosomal subunit protein uS4 (202 aa).

Residues 22–43 form a disordered region; it reads TRKNARRAYPPGQHGQNRRKRS. In terms of domain architecture, S4 RNA-binding spans 90–152; the sequence is MRLDNTVFRL…DKSRKLVQAN (63 aa).

Belongs to the universal ribosomal protein uS4 family. Part of the 30S ribosomal subunit. Contacts protein S5. The interaction surface between S4 and S5 is involved in control of translational fidelity.

Functionally, one of the primary rRNA binding proteins, it binds directly to 16S rRNA where it nucleates assembly of the body of the 30S subunit. Its function is as follows. With S5 and S12 plays an important role in translational accuracy. The sequence is that of Small ribosomal subunit protein uS4 from Gloeothece citriformis (strain PCC 7424) (Cyanothece sp. (strain PCC 7424)).